A 705-amino-acid polypeptide reads, in one-letter code: Mitochondrial division protein 1 (705 aa).

A disordered region spans residues 110–136; it reads APRDTIPQNKNMITENGEKRSAKSKKQ. Basic and acidic residues predominate over residues 125 to 136; that stretch reads NGEKRSAKSKKQ. Residues 216 to 250 are a coiled coil; sequence ITDNLDLLEIQKNLAASEIRELDIKLEKLKMMREL. Disordered regions lie at residues 290-310 and 342-369; these read SEDEENINGLSELSPKTGETN and DHEKKSDISERKKHSTSKKIKDVGVSHR. Basic and acidic residues predominate over residues 342–351; that stretch reads DHEKKSDISE. WD repeat units follow at residues 395–435, 438–476, 492–529, 547–594, 595–632, 634–671, and 676–705; these read AHDE…QIAT, GHLASISCMQIDQYSTLITGGRDAVLKLWDIDKAMADEA, SHVDEITAISFDGDNLVSGSQDRTVRQWDLNSGKCTQT, LRNS…RMLE, GHTDAITSLQFDSVNLVTGAMDRSIRIWDLRTGILSDV, AYEQPITSLHFDLDKIVISNNEPTVKIYNRKDGNHWFC, and PEQGNVDFVRYKHGYLVEGRSNGDINTWAI.

It belongs to the WD repeat MDV1/CAF4 family.

It is found in the mitochondrion outer membrane. Functionally, involved in mitochondrial fission. Acts as an adapter protein required to form mitochondrial fission complexes. Formation of these complexes is required to promote constriction and fission of the mitochondrial compartment at a late step in mitochondrial division. This Kluyveromyces lactis (strain ATCC 8585 / CBS 2359 / DSM 70799 / NBRC 1267 / NRRL Y-1140 / WM37) (Yeast) protein is Mitochondrial division protein 1 (MDV1).